The chain runs to 452 residues: 23S rRNA (uracil(1939)-C(5))-methyltransferase RlmD (452 aa).

Residues 1–57 (METEVNVAEISALDYEGRGVTKVGGKTVFIKGALPSERVGFRIVRQKKQFDEAEAVA) enclose the TRAM domain. [4Fe-4S] cluster is bound by residues Cys-70, Cys-76, Cys-79, and Cys-157. Residues Gln-269, Phe-298, Asn-303, Glu-319, Asn-347, and Asp-368 each contribute to the S-adenosyl-L-methionine site. Catalysis depends on Cys-395, which acts as the Nucleophile.

The protein belongs to the class I-like SAM-binding methyltransferase superfamily. RNA M5U methyltransferase family. RlmD subfamily.

The enzyme catalyses uridine(1939) in 23S rRNA + S-adenosyl-L-methionine = 5-methyluridine(1939) in 23S rRNA + S-adenosyl-L-homocysteine + H(+). In terms of biological role, catalyzes the formation of 5-methyl-uridine at position 1939 (m5U1939) in 23S rRNA. The protein is 23S rRNA (uracil(1939)-C(5))-methyltransferase RlmD of Neisseria lactamica (strain 020-06).